We begin with the raw amino-acid sequence, 41 residues long: Large ribosomal subunit protein bL36 (41 aa).

The protein belongs to the bacterial ribosomal protein bL36 family.

In Opitutus terrae (strain DSM 11246 / JCM 15787 / PB90-1), this protein is Large ribosomal subunit protein bL36.